The chain runs to 635 residues: Very-long-chain aldehyde decarbonylase GL1-6 (635 aa).

Transmembrane regions (helical) follow at residues 46 to 66 (LLNF…QLWI), 100 to 120 (IILT…AQVA), 127 to 147 (GMVV…YWLH), and 183 to 203 (VVYF…GTVS). Residues 139 to 273 (VEFLYYWLHR…MPVYDYIYGT (135 aa)) enclose the Fatty acid hydroxylase domain.

This sequence belongs to the sterol desaturase family. As to quaternary structure, homodimer. Expressed in germinating seeds and shoots.

The protein localises to the endoplasmic reticulum membrane. The catalysed reaction is a long-chain fatty aldehyde + 2 NADPH + O2 + H(+) = a long-chain alkane + formate + 2 NADP(+) + H2O. Its function is as follows. Aldehyde decarbonylase involved in the conversion of aldehydes to alkanes. Core component of a very-long-chain alkane synthesis complex. This Oryza sativa subsp. japonica (Rice) protein is Very-long-chain aldehyde decarbonylase GL1-6.